Here is a 148-residue protein sequence, read N- to C-terminus: Cathelicidin-1 (148 aa).

Residues 1–17 form the signal peptide; it reads MLSCWVLLLALLGGACA. Residues 18–122 constitute a propeptide that is removed on maturation; the sequence is LPAPLGYSQA…TCVDSMADPV (105 aa). Intrachain disulfides connect Cys-75–Cys-86 and Cys-97–Cys-114.

This sequence belongs to the cathelicidin family. As to expression, detected in gizzard, liver, small intestine, large intestine, cloaca, bursa of Fabricius, gall bladder, lung, trachea, kidney, testis and bone marrow.

It localises to the secreted. Binds bacterial lipopolysaccharide (LPS). Has potent antimicrobial activity against Gram-positive and Gram-negative bacteria (in vitro). Has hemolytic activity (in vitro). May play a role in the innate immune response. The polypeptide is Cathelicidin-1 (CATHL1) (Gallus gallus (Chicken)).